The primary structure comprises 341 residues: Anthranilate phosphoribosyltransferase (341 aa).

5-phospho-alpha-D-ribose 1-diphosphate contacts are provided by residues G84, 87–88 (GD), T92, 94–97 (NVTT), 112–120 (KCGNRSVSS), and S124. G84 is an anthranilate binding site. T96 provides a ligand contact to Mg(2+). N115 is a binding site for anthranilate. Position 170 (R170) interacts with anthranilate. Positions 228 and 229 each coordinate Mg(2+).

It belongs to the anthranilate phosphoribosyltransferase family. Homodimer. The cofactor is Mg(2+).

It catalyses the reaction N-(5-phospho-beta-D-ribosyl)anthranilate + diphosphate = 5-phospho-alpha-D-ribose 1-diphosphate + anthranilate. It participates in amino-acid biosynthesis; L-tryptophan biosynthesis; L-tryptophan from chorismate: step 2/5. Functionally, catalyzes the transfer of the phosphoribosyl group of 5-phosphorylribose-1-pyrophosphate (PRPP) to anthranilate to yield N-(5'-phosphoribosyl)-anthranilate (PRA). The sequence is that of Anthranilate phosphoribosyltransferase from Corynebacterium diphtheriae (strain ATCC 700971 / NCTC 13129 / Biotype gravis).